The sequence spans 157 residues: Small ribosomal subunit protein uS7 (157 aa).

It belongs to the universal ribosomal protein uS7 family. As to quaternary structure, part of the 30S ribosomal subunit. Contacts proteins S9 and S11.

One of the primary rRNA binding proteins, it binds directly to 16S rRNA where it nucleates assembly of the head domain of the 30S subunit. Is located at the subunit interface close to the decoding center, probably blocks exit of the E-site tRNA. This Salinibacter ruber (strain DSM 13855 / M31) protein is Small ribosomal subunit protein uS7.